Here is a 143-residue protein sequence, read N- to C-terminus: Transmembrane protein 80 (143 aa).

Transmembrane regions (helical) follow at residues 21–41, 55–75, 99–119, and 121–141; these read MLFYLSGTYYALYFLATLLMI, LVLDLALLFLMGILEAVRLYL, ALLSAHFLLWQALVLWADWAL, and ATLLALHGLEAVLQVVAIAAF.

The protein resides in the membrane. Its subcellular location is the cell projection. It is found in the cilium. In Homo sapiens (Human), this protein is Transmembrane protein 80.